Reading from the N-terminus, the 474-residue chain is Bifunctional protein HldE (474 aa).

Residues 1-317 (MKLSMPRFDR…RRAVQREQGS (317 aa)) are ribokinase. 194–197 (NLAE) contributes to the ATP binding site. The active site involves aspartate 263. The cytidylyltransferase stretch occupies residues 343 to 474 (FTNGCFDILH…GIVEKIRRQP (132 aa)).

In the N-terminal section; belongs to the carbohydrate kinase PfkB family. It in the C-terminal section; belongs to the cytidylyltransferase family. Homodimer.

The enzyme catalyses D-glycero-beta-D-manno-heptose 7-phosphate + ATP = D-glycero-beta-D-manno-heptose 1,7-bisphosphate + ADP + H(+). It carries out the reaction D-glycero-beta-D-manno-heptose 1-phosphate + ATP + H(+) = ADP-D-glycero-beta-D-manno-heptose + diphosphate. Its pathway is nucleotide-sugar biosynthesis; ADP-L-glycero-beta-D-manno-heptose biosynthesis; ADP-L-glycero-beta-D-manno-heptose from D-glycero-beta-D-manno-heptose 7-phosphate: step 1/4. It participates in nucleotide-sugar biosynthesis; ADP-L-glycero-beta-D-manno-heptose biosynthesis; ADP-L-glycero-beta-D-manno-heptose from D-glycero-beta-D-manno-heptose 7-phosphate: step 3/4. Functionally, catalyzes the phosphorylation of D-glycero-D-manno-heptose 7-phosphate at the C-1 position to selectively form D-glycero-beta-D-manno-heptose-1,7-bisphosphate. In terms of biological role, catalyzes the ADP transfer from ATP to D-glycero-beta-D-manno-heptose 1-phosphate, yielding ADP-D-glycero-beta-D-manno-heptose. The sequence is that of Bifunctional protein HldE from Azotobacter vinelandii (strain DJ / ATCC BAA-1303).